The chain runs to 257 residues: Ribonuclease PH (257 aa).

Phosphate-binding positions include Arg-87 and 125 to 127 (GTR).

It belongs to the RNase PH family. As to quaternary structure, homohexameric ring arranged as a trimer of dimers.

It carries out the reaction tRNA(n+1) + phosphate = tRNA(n) + a ribonucleoside 5'-diphosphate. Its function is as follows. Phosphorolytic 3'-5' exoribonuclease that plays an important role in tRNA 3'-end maturation. Removes nucleotide residues following the 3'-CCA terminus of tRNAs; can also add nucleotides to the ends of RNA molecules by using nucleoside diphosphates as substrates, but this may not be physiologically important. Probably plays a role in initiation of 16S rRNA degradation (leading to ribosome degradation) during starvation. The chain is Ribonuclease PH from Geobacillus kaustophilus (strain HTA426).